Reading from the N-terminus, the 415-residue chain is Tyrosine--tRNA ligase (415 aa).

Tyrosine 34 provides a ligand contact to L-tyrosine. The short motif at 39–48 (PSADSLHLGN) is the 'HIGH' region element. L-tyrosine is bound by residues tyrosine 162 and glutamine 166. A 'KMSKS' region motif is present at residues 224–228 (KFGKS). Residue lysine 227 coordinates ATP. Residues 346–413 (IKIIDLLNLA…KRNYFLILWN (68 aa)) form the S4 RNA-binding domain.

The protein belongs to the class-I aminoacyl-tRNA synthetase family. TyrS type 1 subfamily. Homodimer.

The protein localises to the cytoplasm. It carries out the reaction tRNA(Tyr) + L-tyrosine + ATP = L-tyrosyl-tRNA(Tyr) + AMP + diphosphate + H(+). Its function is as follows. Catalyzes the attachment of tyrosine to tRNA(Tyr) in a two-step reaction: tyrosine is first activated by ATP to form Tyr-AMP and then transferred to the acceptor end of tRNA(Tyr). This chain is Tyrosine--tRNA ligase, found in Ureaplasma parvum serovar 3 (strain ATCC 27815 / 27 / NCTC 11736).